We begin with the raw amino-acid sequence, 257 residues long: Hydroxyacylglutathione hydrolase (257 aa).

The Zn(2+) site is built by histidine 54, histidine 56, aspartate 58, histidine 59, histidine 113, aspartate 137, and histidine 175.

Belongs to the metallo-beta-lactamase superfamily. Glyoxalase II family. As to quaternary structure, monomer. Requires Zn(2+) as cofactor.

The catalysed reaction is an S-(2-hydroxyacyl)glutathione + H2O = a 2-hydroxy carboxylate + glutathione + H(+). It participates in secondary metabolite metabolism; methylglyoxal degradation; (R)-lactate from methylglyoxal: step 2/2. Its function is as follows. Thiolesterase that catalyzes the hydrolysis of S-D-lactoyl-glutathione to form glutathione and D-lactic acid. The sequence is that of Hydroxyacylglutathione hydrolase from Microcystis aeruginosa (strain NIES-843 / IAM M-2473).